Consider the following 83-residue polypeptide: Small cysteine-rich protein 3 (83 aa).

Residues 1 to 21 (MGVKLNICLLLLLVAIISSQG) form the signal peptide. Positions 22–39 (FNLRKKEDSKDEKPFGNY) are excised as a propeptide. Over residues 25 to 35 (RKKEDSKDEKP) the composition is skewed to basic and acidic residues. The disordered stretch occupies residues 25–44 (RKKEDSKDEKPFGNYRRGSP).

This sequence belongs to the Cnidaria small cysteine-rich protein (SCRiP) family. alpha subfamily. Post-translationally, contains 4 disulfide bonds.

Its subcellular location is the secreted. The protein localises to the nematocyst. Its function is as follows. This recombinant protein induces severe neurotoxicity on zebrafish larvae (Danio rerio) at a concentration of 230 mg/ml, but does not show toxicity when injected in blowfly larvae (Sarcophaga falculata). All fish incubated with this protein died within 16 hours of exposure. Has also been claimed to be implied in calcification, but this function seems improbable. In Acropora millepora (Staghorn coral), this protein is Small cysteine-rich protein 3.